A 209-amino-acid chain; its full sequence is Orotate phosphoribosyltransferase (209 aa).

Residues Arg96, Lys100, His102, and 122-130 (EDLISTGGS) contribute to the 5-phospho-alpha-D-ribose 1-diphosphate site. Ser126 is a binding site for orotate.

This sequence belongs to the purine/pyrimidine phosphoribosyltransferase family. PyrE subfamily. In terms of assembly, homodimer. It depends on Mg(2+) as a cofactor.

It catalyses the reaction orotidine 5'-phosphate + diphosphate = orotate + 5-phospho-alpha-D-ribose 1-diphosphate. It functions in the pathway pyrimidine metabolism; UMP biosynthesis via de novo pathway; UMP from orotate: step 1/2. Functionally, catalyzes the transfer of a ribosyl phosphate group from 5-phosphoribose 1-diphosphate to orotate, leading to the formation of orotidine monophosphate (OMP). In Lactococcus lactis subsp. lactis (strain IL1403) (Streptococcus lactis), this protein is Orotate phosphoribosyltransferase.